A 359-amino-acid chain; its full sequence is MHLNKLSLFNYKNFSEAGFDFDIKINCFVGKNGIGKTNVLDAIYHLAYGKSYFNPLAVQNIKHGEEFFVIDAELEKNDRTEQIVCSLKKGQKKVLKRNGKAYDKFSDHIGFIPLVIISPADRDLIVEGSETRRKFMDSVISQLDSTYLHQLIQYQKVIVQRNALLKYFALNHTFDNDTLSIYNEQLNEFGKSIFEKRKEFLEEFIPIFNVHHQAITGSEESVQLVYESHLFEKDLLTLLQENINKDRALHYTSSGIHKDDLSFEIDSHPIKKFGSQGQQKSFLIALKLAQFEFLKKQSGVKPILLFDDIFDKLDETRVAKIVEMVNSETFGQLFISDTHPERTEAIVKSTHQTYKIFNL.

30–37 is an ATP binding site; it reads GKNGIGKT.

Belongs to the RecF family.

Its subcellular location is the cytoplasm. Its function is as follows. The RecF protein is involved in DNA metabolism; it is required for DNA replication and normal SOS inducibility. RecF binds preferentially to single-stranded, linear DNA. It also seems to bind ATP. The polypeptide is DNA replication and repair protein RecF (Flavobacterium johnsoniae (strain ATCC 17061 / DSM 2064 / JCM 8514 / BCRC 14874 / CCUG 350202 / NBRC 14942 / NCIMB 11054 / UW101) (Cytophaga johnsonae)).